Consider the following 182-residue polypeptide: uncharacterized protein (182 aa).

To H.pylori HP0274.

This is an uncharacterized protein from Methanocaldococcus jannaschii (strain ATCC 43067 / DSM 2661 / JAL-1 / JCM 10045 / NBRC 100440) (Methanococcus jannaschii).